The chain runs to 343 residues: UDP-3-O-acylglucosamine N-acyltransferase (343 aa).

Histidine 237 (proton acceptor) is an active-site residue.

Belongs to the transferase hexapeptide repeat family. LpxD subfamily. In terms of assembly, homotrimer.

The enzyme catalyses a UDP-3-O-[(3R)-3-hydroxyacyl]-alpha-D-glucosamine + a (3R)-hydroxyacyl-[ACP] = a UDP-2-N,3-O-bis[(3R)-3-hydroxyacyl]-alpha-D-glucosamine + holo-[ACP] + H(+). The protein operates within bacterial outer membrane biogenesis; LPS lipid A biosynthesis. Catalyzes the N-acylation of UDP-3-O-acylglucosamine using 3-hydroxyacyl-ACP as the acyl donor. Is involved in the biosynthesis of lipid A, a phosphorylated glycolipid that anchors the lipopolysaccharide to the outer membrane of the cell. The polypeptide is UDP-3-O-acylglucosamine N-acyltransferase (Synechococcus sp. (strain JA-3-3Ab) (Cyanobacteria bacterium Yellowstone A-Prime)).